We begin with the raw amino-acid sequence, 538 residues long: Dolichol kinase (538 aa).

At 1-13 (MTRECPSPAPGPG) the chain is on the lumenal side. A helical membrane pass occupies residues 14–34 (APLSGSVLAEAAVVFAVVLSI). Residues 35-74 (HATVWDRYSWCAVALAVQAFYVQYKWDRLLQQGSAVFQFR) lie on the Cytoplasmic side of the membrane. Residues 75–95 (MSANSGLLPASMVMPLLGLVM) form a helical membrane-spanning segment. The Lumenal segment spans residues 96-111 (KERCQTAGNPFFERFG). The helical transmembrane segment at 112-132 (IVVAATGMAVALFSSVLALGI) threads the bilayer. Topologically, residues 133–134 (TR) are cytoplasmic. Residues 135–155 (PVPTNTCVILGLAGGVIIYIM) traverse the membrane as a helical segment. The Lumenal segment spans residues 156-163 (KHSLSVGE). The helical transmembrane segment at 164 to 184 (VIEVLEVLLIFVYLNMILLYL) threads the bilayer. At 185–188 (LPRC) the chain is on the cytoplasmic side. The helical transmembrane segment at 189–209 (FTPGEALLVLGGISFVLNQLI) threads the bilayer. Over 210-224 (KRSLTLVESQGDPVD) the chain is Lumenal. The helical transmembrane segment at 225–245 (FFLLVVVVGMVLMGIFFSTLF) threads the bilayer. The Cytoplasmic segment spans residues 246 to 254 (VFMDSGTWA). Residues 255 to 275 (SSIFFHLMTCVLSLGVVLPWL) form a helical membrane-spanning segment. Residues 276-297 (HRLIRRNPLLWLLQFLFQTDTR) are Lumenal-facing. The helical transmembrane segment at 298–318 (IYLLAYWSLLATLACLVVLYQ) threads the bilayer. At 319–337 (NAKRSSSESKKHQAPTIAR) the chain is on the cytoplasmic side. A helical membrane pass occupies residues 338-354 (KYFHLIVVATYIPGIIF). Residues 355-359 (DRPLL) are Lumenal-facing. The helical transmembrane segment at 360 to 380 (YVAATVCLAVFIFLEYVRYFR) threads the bilayer. Residues 381-401 (IKPLGHTLRSFLSLFLDERDS) are Cytoplasmic-facing. The helical transmembrane segment at 402–422 (GPLILTHIYLLLGMSLPIWLI) threads the bilayer. Residues 423-436 (PRPCTQKGSLGGAR) are Lumenal-facing. A helical membrane pass occupies residues 437-457 (ALVPYAGVLAVGVGDTVASIF). Over 458–472 (GSTMGEIRWPGTKKT) the chain is Cytoplasmic. Residues 459 to 474 (STMGEIRWPGTKKTFE) are CTP-binding. The chain crosses the membrane as a helical span at residues 473–493 (FEGTMTSIFAQIISVALILIF). Residues 494–495 (DS) lie on the Lumenal side of the membrane. A helical membrane pass occupies residues 496 to 516 (GVDLNYSYAWILGSISTVSLL). Topologically, residues 517-538 (EAYTTQIDNLLLPLYLLILLMA) are cytoplasmic.

It belongs to the polyprenol kinase family. In terms of tissue distribution, ubiquitous.

The protein resides in the endoplasmic reticulum membrane. It carries out the reaction a di-trans,poly-cis-dolichol + CTP = a di-trans,poly-cis-dolichyl phosphate + CDP + H(+). The protein operates within protein modification; protein glycosylation. In terms of biological role, catalyzes CTP-mediated phosphorylation of dolichol, the terminal step in de novo dolichyl monophosphate (Dol-P) biosynthesis. Dol-P is a lipid carrier essential for the synthesis of N-linked and O-linked oligosaccharides and for GPI anchors. This chain is Dolichol kinase (DOLK), found in Homo sapiens (Human).